A 762-amino-acid polypeptide reads, in one-letter code: 5-methyltetrahydropteroyltriglutamate--homocysteine methyltransferase (762 aa).

5-methyltetrahydropteroyltri-L-glutamate contacts are provided by residues 17 to 20 (REWK) and K111. Residues 435–437 (IGS) and E488 each bind L-homocysteine. Residues 435 to 437 (IGS) and E488 contribute to the L-methionine site. 5-methyltetrahydropteroyltri-L-glutamate contacts are provided by residues 519–520 (RC) and W565. D603 contributes to the L-homocysteine binding site. D603 contacts L-methionine. Residue E609 participates in 5-methyltetrahydropteroyltri-L-glutamate binding. H645, C647, and E669 together coordinate Zn(2+). The active-site Proton donor is H698. C730 contributes to the Zn(2+) binding site.

Belongs to the vitamin-B12 independent methionine synthase family. Requires Zn(2+) as cofactor.

The enzyme catalyses 5-methyltetrahydropteroyltri-L-glutamate + L-homocysteine = tetrahydropteroyltri-L-glutamate + L-methionine. The protein operates within amino-acid biosynthesis; L-methionine biosynthesis via de novo pathway; L-methionine from L-homocysteine (MetE route): step 1/1. Its function is as follows. Catalyzes the transfer of a methyl group from 5-methyltetrahydrofolate to homocysteine resulting in methionine formation. This Bacillus cereus (strain ZK / E33L) protein is 5-methyltetrahydropteroyltriglutamate--homocysteine methyltransferase.